The following is a 301-amino-acid chain: rRNA methyltransferase 1, mitochondrial (301 aa).

Residues M1–E11 constitute a mitochondrion transit peptide. The interval Y121 to S141 is disordered.

Belongs to the class IV-like SAM-binding methyltransferase superfamily. RNA methyltransferase TrmH family.

It is found in the mitochondrion. It catalyses the reaction a guanosine in 21S rRNA + S-adenosyl-L-methionine = a 2'-O-methylguanosine in 21S rRNA + S-adenosyl-L-homocysteine + H(+). In terms of biological role, S-adenosyl-L-methionine-dependent 2'-O-ribose methyltransferase that catalyzes the formation of the 2'-O-methylguanosine corresponding to position 2270 in S.cerevisiae 21S mitochondrial large subunit ribosomal RNA (mtLSU rRNA), a universally conserved modification in the peptidyl transferase domain of the mtLSU rRNA. The sequence is that of rRNA methyltransferase 1, mitochondrial from Schizosaccharomyces pombe (strain 972 / ATCC 24843) (Fission yeast).